The primary structure comprises 113 residues: Large ribosomal subunit protein eL30 (113 aa).

Belongs to the eukaryotic ribosomal protein eL30 family.

The chain is Large ribosomal subunit protein eL30 (RpL30) from Spodoptera frugiperda (Fall armyworm).